Consider the following 428-residue polypeptide: MTAVKTPIQVRYEVRNLELAAEGRQRIEWAAREMPVLKQLRQRFSQERPLAGIRISACCHVTTETANLAVALKAAGADALLIASNPLSTQDDVAASLVVDHGIPVFALKGEDTATYLRHVRVALDHRPQIIIDDGSDVVATMIKDRPDLIAGVIGTTEETTTGIVRLKAMLAAGVLTFPAMAVNDAETKHFFDNRYGTGQSTLDGIIRATNILLAGKTIVVAGYGWCGKGVALRARGMGANVVVTEINPVRAIEAAMDGLQVMPMAEAACLGDLFITVTGNKHVIRREHFAMMKDGAIVCNSGHFDIEIDLVALGELSSERRMVRPFTEEYTLEGGKSVIVLGEGRLINLAAAEGHPASVMDMSFANQALAVEYLIKNQGKLSPGIYNIPEELDRQIAALKLAAMGIAIDTLTPDQLHYISSWDEGTE.

3 residues coordinate substrate: Thr-62, Asp-134, and Glu-159. Residue 160–162 (TTT) coordinates NAD(+). Substrate contacts are provided by Lys-189 and Asp-193. Residues Asn-194, 223–228 (GYGWCG), Glu-246, Asn-281, 302–304 (SGH), and Asn-349 contribute to the NAD(+) site.

Belongs to the adenosylhomocysteinase family. NAD(+) serves as cofactor.

The protein localises to the cytoplasm. It catalyses the reaction S-adenosyl-L-homocysteine + H2O = L-homocysteine + adenosine. The protein operates within amino-acid biosynthesis; L-homocysteine biosynthesis; L-homocysteine from S-adenosyl-L-homocysteine: step 1/1. In terms of biological role, may play a key role in the regulation of the intracellular concentration of adenosylhomocysteine. This Gloeobacter violaceus (strain ATCC 29082 / PCC 7421) protein is Adenosylhomocysteinase.